The sequence spans 105 residues: Urease subunit beta (105 aa).

The protein belongs to the urease beta subunit family. Heterotrimer of UreA (gamma), UreB (beta) and UreC (alpha) subunits. Three heterotrimers associate to form the active enzyme.

It is found in the cytoplasm. The enzyme catalyses urea + 2 H2O + H(+) = hydrogencarbonate + 2 NH4(+). It functions in the pathway nitrogen metabolism; urea degradation; CO(2) and NH(3) from urea (urease route): step 1/1. In Marinobacter nauticus (strain ATCC 700491 / DSM 11845 / VT8) (Marinobacter aquaeolei), this protein is Urease subunit beta.